Consider the following 251-residue polypeptide: 2,3-bisphosphoglycerate-dependent phosphoglycerate mutase (251 aa).

Residues 13–20 (RHGESEWN), 26–27 (TG), Arg65, 92–95 (ERHY), Lys103, 119–120 (RR), and 186–187 (GN) each bind substrate. His14 acts as the Tele-phosphohistidine intermediate in catalysis. Catalysis depends on Glu92, which acts as the Proton donor/acceptor.

This sequence belongs to the phosphoglycerate mutase family. BPG-dependent PGAM subfamily.

It catalyses the reaction (2R)-2-phosphoglycerate = (2R)-3-phosphoglycerate. Its pathway is carbohydrate degradation; glycolysis; pyruvate from D-glyceraldehyde 3-phosphate: step 3/5. Catalyzes the interconversion of 2-phosphoglycerate and 3-phosphoglycerate. This chain is 2,3-bisphosphoglycerate-dependent phosphoglycerate mutase, found in Rhodococcus opacus (strain B4).